A 1024-amino-acid polypeptide reads, in one-letter code: Protein translocase subunit SecA (1024 aa).

ATP is bound by residues Gln-143, 161-165 (GEGKT), and Asp-661. Residues 970-1024 (HEEAGSVYNAQPDGEPESQASKQQPVVADHSKPGRNDLCPCGSGKKYKNCHGREA) form a disordered region. Residues Cys-1008, Cys-1010, Cys-1019, and His-1020 each contribute to the Zn(2+) site. Positions 1014–1024 (KKYKNCHGREA) are enriched in basic residues.

The protein belongs to the SecA family. Monomer and homodimer. Part of the essential Sec protein translocation apparatus which comprises SecA, SecYEG and auxiliary proteins SecDF. Other proteins may also be involved. The cofactor is Zn(2+).

Its subcellular location is the cell inner membrane. The protein resides in the cytoplasm. It carries out the reaction ATP + H2O + cellular proteinSide 1 = ADP + phosphate + cellular proteinSide 2.. Functionally, part of the Sec protein translocase complex. Interacts with the SecYEG preprotein conducting channel. Has a central role in coupling the hydrolysis of ATP to the transfer of proteins into and across the cell membrane, serving as an ATP-driven molecular motor driving the stepwise translocation of polypeptide chains across the membrane. This Chlorobium luteolum (strain DSM 273 / BCRC 81028 / 2530) (Pelodictyon luteolum) protein is Protein translocase subunit SecA.